Here is a 477-residue protein sequence, read N- to C-terminus: MLRWLRDFVLPTAACQDAEQPTRYETLFQALDRNGDGVVDIGELQEGLRNLGIPLGQDAEEKIFTTGDVNKDGKLDFEEFMKYLKDHEKKMKLAFKSLDKNNDGKIEASEIVQSLQTLGLTISEQQAELILQSIDVDGTMTVDWNEWRDYFLFNPVTDIEEIIRFWKHSTGIDIGDSLTIPDEFTEDEKKSGQWWRQLLAGGIAGAVSRTSTAPLDRLKIMMQVHGSKSDKMNIFGGFRQMVKEGGIRSLWRGNGTNVIKIAPETAVKFWAYEQYKKLLTEEGQKIGTFERFISGSMAGATAQTFIYPMEVMKTRLAVGKTGQYSGIYDCAKKILKHEGLGAFYKGYVPNLLGIIPYAGIDLAVYELLKSYWLDNFAKDSVNPGVMVLLGCGALSSTCGQLASYPLALVRTRMQAQAMLEGSPQLNMVGLFRRIISKEGIPGLYRGITPNFMKVLPAVGISYVVYENMKQTLGVTQK.

Positions methionine 1–aspartate 173 are regulatory N-terminal domain. Over methionine 1–glutamine 197 the chain is Mitochondrial intermembrane. EF-hand domains lie at glutamate 19–proline 54, leucine 55–glutamate 88, aspartate 86–threonine 121, and isoleucine 122–threonine 157. Aspartate 32, asparagine 34, aspartate 36, valine 38, glutamate 43, aspartate 68, asparagine 70, aspartate 72, lysine 74, glutamate 79, aspartate 99, asparagine 101, aspartate 103, lysine 105, glutamate 110, aspartate 135, aspartate 137, threonine 139, threonine 141, and glutamate 146 together coordinate Ca(2+). The linker region stretch occupies residues isoleucine 159–histidine 168. Positions isoleucine 174 to lysine 477 are C-terminal transmembrane transporter domain. Solcar repeat units lie at residues glycine 192–leucine 278, isoleucine 286–tyrosine 371, and proline 383–threonine 471. A helical transmembrane segment spans residues leucine 198–leucine 215. At aspartate 216–arginine 252 the chain is on the mitochondrial matrix side. The helical transmembrane segment at glycine 253–tyrosine 272 threads the bilayer. At glutamate 273–glycine 295 the chain is on the mitochondrial intermembrane side. The chain crosses the membrane as a helical span at residues serine 296–methionine 309. The Mitochondrial matrix segment spans residues glutamate 310 to lysine 345. Lysine 320 is modified (N6-acetyllysine; alternate). Lysine 320 is modified (N6-succinyllysine; alternate). Lysine 336 bears the N6-acetyllysine mark. Residues glycine 346 to tyrosine 365 traverse the membrane as a helical segment. Topologically, residues glutamate 366–leucine 388 are mitochondrial intermembrane. A helical transmembrane segment spans residues leucine 389 to leucine 406. The Mitochondrial matrix portion of the chain corresponds to alanine 407 to arginine 445. Residue lysine 437 is modified to N6-acetyllysine; alternate. Position 437 is an N6-succinyllysine; alternate (lysine 437). A helical membrane pass occupies residues glycine 446–tyrosine 465. The Mitochondrial intermembrane segment spans residues glutamate 466–lysine 477.

The protein belongs to the mitochondrial carrier (TC 2.A.29) family. In terms of assembly, monomer. In terms of tissue distribution, expressed in all tissues tested. Highly expressed in testis, expressed at intermediate level in small intestine and pancreas, and weakly expressed in kidney, spleen, liver, skeletal muscle and heart.

It is found in the mitochondrion inner membrane. It catalyses the reaction Mg(2+)(out) + phosphate(in) + ATP(out) = Mg(2+)(in) + phosphate(out) + ATP(in). It carries out the reaction ADP(out) + phosphate(in) + H(+)(out) = ADP(in) + phosphate(out) + H(+)(in). The enzyme catalyses AMP(out) + phosphate(in) = AMP(in) + phosphate(out). The catalysed reaction is phosphate(in) + ATP(out) + 2 H(+)(out) = phosphate(out) + ATP(in) + 2 H(+)(in). It catalyses the reaction dADP(in) + ADP(out) = dADP(out) + ADP(in). It carries out the reaction Mg(2+)(in) + ADP(out) + ATP(in) + H(+)(out) = Mg(2+)(out) + ADP(in) + ATP(out) + H(+)(in). The enzyme catalyses ADP(out) + diphosphate(in) = ADP(in) + diphosphate(out). The catalysed reaction is dAMP(in) + ADP(out) + H(+)(out) = dAMP(out) + ADP(in) + H(+)(in). It catalyses the reaction 3'-AMP(in) + ADP(out) + H(+)(out) = 3'-AMP(out) + ADP(in) + H(+)(in). It carries out the reaction dAMP(out) + phosphate(in) = dAMP(in) + phosphate(out). The enzyme catalyses 3'-AMP(out) + phosphate(in) = 3'-AMP(in) + phosphate(out). The catalysed reaction is dADP(out) + phosphate(in) + H(+)(out) = dADP(in) + phosphate(out) + H(+)(in). With respect to regulation, activated by an increase in cytosolic calcium levels that induce a conformational change of the N-terminal regulatory domain, uncapping the channel and allowing transport. Inhibited by bathophenanthroline, mersalyl, p-hydroxymercuribenzoate, bromcresol purple and tannic acid. Electroneutral antiporter that mediates the transport of adenyl nucleotides through the inner mitochondrial membrane. Originally identified as an ATP-magnesium/inorganic phosphate antiporter, it also acts as a broad specificity adenyl nucleotide antiporter. By regulating the mitochondrial matrix adenyl nucleotide pool could adapt to changing cellular energetic demands and indirectly regulate adenyl nucleotide-dependent metabolic pathways. In vitro, a low activity is also observed with guanyl and pyrimidine nucleotides. May play a role in protecting cells against oxidative stress-induced cell death, by buffering calcium levels in the mitochondrial matrix through the formation of calcium-phosphate precipitates. The sequence is that of Mitochondrial adenyl nucleotide antiporter SLC25A24 from Homo sapiens (Human).